The primary structure comprises 255 residues: Small ribosomal subunit protein uS3c (255 aa).

One can recognise a KH type-2 domain in the interval 51–124 (IRESSNTSYG…NKNQNKNTGQ (74 aa)). Residues 96 to 121 (EKNRDKNKSNKNSALDQSVNKNQNKN) form a disordered region. Polar residues predominate over residues 108 to 121 (SALDQSVNKNQNKN).

It belongs to the universal ribosomal protein uS3 family. As to quaternary structure, part of the 30S ribosomal subunit.

It localises to the plastid. The protein resides in the chloroplast. In Chaetosphaeridium globosum (Charophycean green alga), this protein is Small ribosomal subunit protein uS3c (rps3).